The sequence spans 395 residues: Putative carbonic anhydrase 1 (395 aa).

The N-terminal stretch at 1–24 (MKLQGAGCVVAAVLGALFIVNVES) is a signal peptide. The 324-residue stretch at 42 to 365 (ISYDVRSTIG…LNDRPVFLVR (324 aa)) folds into the Alpha-carbonic anhydrase domain. Positions 139, 141, and 165 each coordinate Zn(2+).

It belongs to the alpha-carbonic anhydrase family. The cofactor is Zn(2+). In terms of tissue distribution, component of the acid-insoluble and acid-soluble organic matrix of calcified layers of the shell (at protein level).

The protein localises to the secreted. It catalyses the reaction hydrogencarbonate + H(+) = CO2 + H2O. In terms of biological role, reversible hydration of carbon dioxide. In Lottia gigantea (Giant owl limpet), this protein is Putative carbonic anhydrase 1.